The following is a 440-amino-acid chain: Tol-Pal system protein TolB (440 aa).

The N-terminal stretch at 1–28 is a signal peptide; sequence MVMTRRIFFSWFIVICSLWLSSFSSVHA. The segment at 417-440 is disordered; the sequence is RNERQLPTPNDASDPAWSPLLNMQ.

This sequence belongs to the TolB family. In terms of assembly, the Tol-Pal system is composed of five core proteins: the inner membrane proteins TolA, TolQ and TolR, the periplasmic protein TolB and the outer membrane protein Pal. They form a network linking the inner and outer membranes and the peptidoglycan layer.

It is found in the periplasm. Its function is as follows. Part of the Tol-Pal system, which plays a role in outer membrane invagination during cell division and is important for maintaining outer membrane integrity. This Bartonella quintana (strain Toulouse) (Rochalimaea quintana) protein is Tol-Pal system protein TolB.